The following is an 875-amino-acid chain: Neurotrypsin (875 aa).

Positions 1-20 (MTLARFVLALMLGALPEVVG) are cleaved as a signal peptide. Asparagine 26 carries an N-linked (GlcNAc...) asparagine glycan. Positions 29–88 (LHHSHRHSPPPGPHYPYYLPTQQRPPRTRPPPPLPRFPRPPRALPAQRPHALQAGHTPRP) are disordered. Positions 43–53 (YPYYLPTQQRP) are enriched in low complexity. Residues 56–71 (TRPPPPLPRFPRPPRA) show a composition bias toward pro residues. The Kringle domain maps to 93–165 (CPAGEPWVSV…GKVDWGYCDC (73 aa)). Intrachain disulfides connect cysteine 93/cysteine 165, cysteine 109/cysteine 149, cysteine 138/cysteine 163, cysteine 195/cysteine 259, cysteine 208/cysteine 269, cysteine 239/cysteine 249, cysteine 305/cysteine 369, cysteine 318/cysteine 379, cysteine 349/cysteine 359, cysteine 412/cysteine 475, cysteine 425/cysteine 485, cysteine 455/cysteine 465, cysteine 525/cysteine 589, cysteine 538/cysteine 599, cysteine 569/cysteine 579, cysteine 619/cysteine 750, cysteine 661/cysteine 677, cysteine 765/cysteine 831, cysteine 794/cysteine 808, and cysteine 821/cysteine 850. SRCR domains lie at 170–271 (VRLR…TCSF), 280–381 (IRLA…SCTP), 387–487 (IRLA…ACYP), and 500–601 (VRLV…ICDY). The tract at residues 619-630 (CGLRLLHRRQKR) is zymogen activation region. In terms of domain architecture, Peptidase S1 spans 631–874 (IIGGKNSLRG…FVPWIKSVTK (244 aa)). Residue histidine 676 is the Charge relay system of the active site. Asparagine 683 carries an N-linked (GlcNAc...) asparagine glycan. Aspartate 726 serves as the catalytic Charge relay system. The Charge relay system role is filled by serine 825.

It belongs to the peptidase S1 family.

The protein resides in the secreted. Plays a role in neuronal plasticity and the proteolytic action may subserve structural reorganizations associated with learning and memory operations. The chain is Neurotrypsin (PRSS12) from Pan troglodytes (Chimpanzee).